A 971-amino-acid polypeptide reads, in one-letter code: U2 snRNP component HSH155 (971 aa).

Disordered stretches follow at residues 1–22 (MSHPIQFVNANNSDKSHQLGGQ) and 54–118 (TRTV…AVKE). Residues 8-22 (VNANNSDKSHQLGGQ) are compositionally biased toward polar residues. The span at 54–75 (TRTVQNREDSYHKRRFDMKFEP) shows a compositional bias: basic and acidic residues. The segment covering 78-90 (DTQTVTSSENTQD) has biased composition (polar residues). 9 HEAT repeats span residues 199–237 (MIFNRLLPILLDRSLEDQERHLMIKTIDRVLYQLGDLTK), 273–310 (AGLKTILTVMRPDIENEDEYVRNVTSRAAAVVAKALGV), 350–387 (NHLTGLMSCIKDCLMDDHVPVRIVTAHTLSTLAENSYP), 513–550 (LGCSYTIDKLLTPLRDEAEPFRTMAVHAVTRTVNLLGT), 596–633 (PFLAPIVSTILNHLKHKTPLVRQHAADLCAILIPVIKN), 680–717 (PPINQILPTLTPILRNKHRKVEVNTIKFVGLIGKLAPT), 722–759 (KEWMRICFELLELLKSTNKEIRRSANATFGFIAEAIGP), 792–829 (CGPYNVLPVIMNEYTTPETNVQNGVLKAMSFMFEYIGN), and 832–870 (KDYIYFITPLLEDALTDRDLVHRQTASNVITHLALNCSG).

It belongs to the SF3B1 family. In terms of assembly, belongs to the CWC complex (or CEF1-associated complex), a spliceosome sub-complex reminiscent of a late-stage spliceosome composed of the U2, U5 and U6 snRNAs and at least BUD13, BUD31, BRR2, CDC40, CEF1, CLF1, CUS1, CWC2, CWC15, CWC21, CWC22, CWC23, CWC24, CWC25, CWC27, ECM2, HSH155, IST3, ISY1, LEA1, MSL1, NTC20, PRP8, PRP9, PRP11, PRP19, PRP21, PRP22, PRP45, PRP46, SLU7, SMB1, SMD1, SMD2, SMD3, SMX2, SMX3, SNT309, SNU114, SPP2, SYF1, SYF2, RSE1 and YJU2. Interacts with RDS3.

The protein localises to the nucleus. Its function is as follows. Contacts pre-mRNA on both sides of the branch site early in spliceosome assembly. This is U2 snRNP component HSH155 (HSH155) from Saccharomyces cerevisiae (strain ATCC 204508 / S288c) (Baker's yeast).